The chain runs to 408 residues: MSDKSHQIYCYFWLFGLINNVLYVVILSAAVDIVGPTLPKSLVLLADIFPSLAIKLCSPFFIDRIKYSYRIWSLITMSCLGMFLVSFKNLFVCLLGISFASISSGFGEVTFLQLTHYYKQISLNGWSSGTGGAGIIGGASYMFLTSIFKVPVKLTLLVFSLLPFAFLFYFKLESNDTNLTYQSLQQIDEAEDDQLVPFPVAFTHTNASQSLYSTRQHILQTVKRLRRLVFPYMVPLTTVYLFEYLINQAVAPTLLFPINGDERSKSMPFFFHKYRDIYVTYGTLYQLGVFISRSFGHLMRMRSLYILAFLQGVNLCITVLQSWFYVTHSPWAVMILIFYEGFLGGASYVNTFLNILEQEDPDETEFAMGAVSIADSFGVFLAALLGLGLEPKLCRHQIADDRPWCRME.

A signal peptide spans 1-30 (MSDKSHQIYCYFWLFGLINNVLYVVILSAA). 7 helical membrane-spanning segments follow: residues 42 to 62 (LVLLADIFPSLAIKLCSPFFI), 80 to 100 (LGMFLVSFKNLFVCLLGISFA), 128 to 148 (SGTGGAGIIGGASYMFLTSIF), 150 to 170 (VPVKLTLLVFSLLPFAFLFYF), 238 to 258 (TVYLFEYLINQAVAPTLLFPI), 323 to 343 (WFYVTHSPWAVMILIFYEGFL), and 369 to 389 (GAVSIADSFGVFLAALLGLGL).

Belongs to the battenin family.

It localises to the vacuole membrane. Plays a role in vacuolar arginine transport. Involved in pH homeostasis. May be involved in ion homeostasis together with IST2. Not necessary for mitochondrial function or ATP synthase degradation. The polypeptide is Protein BTN1 (YHC3) (Saccharomyces cerevisiae (strain ATCC 204508 / S288c) (Baker's yeast)).